Reading from the N-terminus, the 100-residue chain is Urease subunit gamma (100 aa).

The protein belongs to the urease gamma subunit family. As to quaternary structure, heterotrimer of UreA (gamma), UreB (beta) and UreC (alpha) subunits. Three heterotrimers associate to form the active enzyme.

The protein resides in the cytoplasm. It carries out the reaction urea + 2 H2O + H(+) = hydrogencarbonate + 2 NH4(+). It participates in nitrogen metabolism; urea degradation; CO(2) and NH(3) from urea (urease route): step 1/1. This chain is Urease subunit gamma, found in Corynebacterium efficiens (strain DSM 44549 / YS-314 / AJ 12310 / JCM 11189 / NBRC 100395).